We begin with the raw amino-acid sequence, 199 residues long: FMN-dependent NADH:quinone oxidoreductase 2 (199 aa).

FMN-binding positions include S10, S17–S19, and T135–G138.

This sequence belongs to the azoreductase type 1 family. Homodimer. FMN serves as cofactor.

The catalysed reaction is 2 a quinone + NADH + H(+) = 2 a 1,4-benzosemiquinone + NAD(+). The enzyme catalyses N,N-dimethyl-1,4-phenylenediamine + anthranilate + 2 NAD(+) = 2-(4-dimethylaminophenyl)diazenylbenzoate + 2 NADH + 2 H(+). Quinone reductase that provides resistance to thiol-specific stress caused by electrophilic quinones. Functionally, also exhibits azoreductase activity. Catalyzes the reductive cleavage of the azo bond in aromatic azo compounds to the corresponding amines. This is FMN-dependent NADH:quinone oxidoreductase 2 from Mesoplasma florum (strain ATCC 33453 / NBRC 100688 / NCTC 11704 / L1) (Acholeplasma florum).